Reading from the N-terminus, the 141-residue chain is Galactose-6-phosphate isomerase subunit LacA (141 aa).

Belongs to the LacAB/RpiB family. In terms of assembly, heteromultimeric protein consisting of LacA and LacB.

It catalyses the reaction aldehydo-D-galactose 6-phosphate = keto-D-tagatose 6-phosphate. Its pathway is carbohydrate metabolism; D-galactose 6-phosphate degradation; D-tagatose 6-phosphate from D-galactose 6-phosphate: step 1/1. The chain is Galactose-6-phosphate isomerase subunit LacA from Streptococcus pneumoniae serotype 4 (strain ATCC BAA-334 / TIGR4).